Here is a 253-residue protein sequence, read N- to C-terminus: Tyrosine recombinase XerD-like (253 aa).

The 74-residue stretch at 8–81 folds into the Core-binding (CB) domain; the sequence is KQLTTQITNF…AVNQFLLYLY (74 aa). A Tyr recombinase domain is found at 93 to 253; that stretch reads SETAPLPSQQ…PVTLEKYYKT (161 aa). Residues Lys-157 and Arg-218 contribute to the active site. The active-site O-(3'-phospho-DNA)-tyrosine intermediate is Tyr-250.

Belongs to the 'phage' integrase family. XerD-like subfamily.

It is found in the cytoplasm. In terms of biological role, putative tyrosine recombinase. Not involved in the cutting and rejoining of the recombining DNA molecules on dif(SL) site. The polypeptide is Tyrosine recombinase XerD-like (Streptococcus thermophilus (strain CNRZ 1066)).